The primary structure comprises 140 residues: Ribosome-binding factor A (140 aa).

Residues 121–140 are disordered; that stretch reads KTEQTSADDDADRLDSEDRS.

Belongs to the RbfA family. In terms of assembly, monomer. Binds 30S ribosomal subunits, but not 50S ribosomal subunits or 70S ribosomes.

Its subcellular location is the cytoplasm. Its function is as follows. One of several proteins that assist in the late maturation steps of the functional core of the 30S ribosomal subunit. Associates with free 30S ribosomal subunits (but not with 30S subunits that are part of 70S ribosomes or polysomes). Required for efficient processing of 16S rRNA. May interact with the 5'-terminal helix region of 16S rRNA. In Psychrobacter sp. (strain PRwf-1), this protein is Ribosome-binding factor A.